The chain runs to 382 residues: Mannitol-1-phosphate 5-dehydrogenase (382 aa).

Position 3-14 (3-14) interacts with NAD(+); the sequence is ALHFGAGNIGRG.

This sequence belongs to the mannitol dehydrogenase family.

The catalysed reaction is D-mannitol 1-phosphate + NAD(+) = beta-D-fructose 6-phosphate + NADH + H(+). The chain is Mannitol-1-phosphate 5-dehydrogenase from Tolumonas auensis (strain DSM 9187 / NBRC 110442 / TA 4).